The following is a 144-amino-acid chain: Vasopressin-neurophysin 2-copeptin (144 aa).

An intrachain disulfide couples C1 to C6. A Glycine amide modification is found at G9. Cystine bridges form between C22–C66, C25–C39, C33–C56, C40–C46, C73–C85, C79–C97, and C86–C91. N112 carries an N-linked (GlcNAc...) asparagine glycan.

The protein belongs to the vasopressin/oxytocin family. In terms of assembly, interacts with vasopressin receptors V1bR/AVPR1B (Ki=85 pM), V1aR/AVPR1A (Ki=0.6 nM) and V2R/AVPR2 (Ki=4.9 nM). Interacts with oxytocin receptor (OXTR) (Ki=110 nM).

It is found in the secreted. Its function is as follows. Neurophysin 2 specifically binds vasopressin. Vasopressin has a direct antidiuretic action on the kidney, it also causes vasoconstriction of the peripheral vessels. Acts by binding to vasopressin receptors (V1bR/AVPR1B, V1aR/AVPR1A, and V2R/AVPR2). This is Vasopressin-neurophysin 2-copeptin (AVP) from Cavia porcellus (Guinea pig).